We begin with the raw amino-acid sequence, 205 residues long: Thymidylate kinase (205 aa).

11 to 18 (GVEGSGKS) provides a ligand contact to ATP.

It belongs to the thymidylate kinase family.

The catalysed reaction is dTMP + ATP = dTDP + ADP. Its function is as follows. Phosphorylation of dTMP to form dTDP in both de novo and salvage pathways of dTTP synthesis. In Ruthia magnifica subsp. Calyptogena magnifica, this protein is Thymidylate kinase.